The chain runs to 224 residues: Adenylate kinase (224 aa).

An ATP-binding site is contributed by 10 to 15 (GSGKGT). The tract at residues 30 to 59 (ESGAIFRENISKGTELGAKAKEYIDRGDLV) is NMP. AMP is bound by residues Ser-31, Arg-36, 57–59 (DLV), 85–88 (GFPR), and Gln-92. The LID stretch occupies residues 126 to 165 (GRRLCVNDNNHPNNIFIDAIKPDGDKCRVCGGELKTRSDD). Residue Arg-127 coordinates ATP. Residues Arg-162 and Arg-174 each coordinate AMP. ATP is bound at residue Pro-211.

This sequence belongs to the adenylate kinase family. As to quaternary structure, monomer.

The protein resides in the cytoplasm. The enzyme catalyses AMP + ATP = 2 ADP. It participates in purine metabolism; AMP biosynthesis via salvage pathway; AMP from ADP: step 1/1. Functionally, catalyzes the reversible transfer of the terminal phosphate group between ATP and AMP. Plays an important role in cellular energy homeostasis and in adenine nucleotide metabolism. The chain is Adenylate kinase from Desulfosudis oleivorans (strain DSM 6200 / JCM 39069 / Hxd3) (Desulfococcus oleovorans).